Reading from the N-terminus, the 342-residue chain is Isopentenyl-diphosphate delta-isomerase (342 aa).

Residue Arg-12–Lys-13 participates in substrate binding. Residues Ala-71–Thr-73, Ser-101, and Asn-129 contribute to the FMN site. Ser-101–Arg-103 lines the substrate pocket. Residue Gln-163 coordinates substrate. Glu-164 is a Mg(2+) binding site. FMN contacts are provided by residues Lys-195, Thr-225, Gly-272 to Arg-274, and Ala-293 to Arg-294.

The protein belongs to the IPP isomerase type 2 family. In terms of assembly, homooctamer. Dimer of tetramers. It depends on FMN as a cofactor. NADPH is required as a cofactor. Mg(2+) serves as cofactor.

It localises to the cytoplasm. It catalyses the reaction isopentenyl diphosphate = dimethylallyl diphosphate. Its function is as follows. Involved in the biosynthesis of isoprenoids. Catalyzes the 1,3-allylic rearrangement of the homoallylic substrate isopentenyl (IPP) to its allylic isomer, dimethylallyl diphosphate (DMAPP). The chain is Isopentenyl-diphosphate delta-isomerase from Mycolicibacterium gilvum (strain PYR-GCK) (Mycobacterium gilvum (strain PYR-GCK)).